The primary structure comprises 255 residues: Wtf element wtf15 (255 aa).

A disordered region spans residues 19–78 (KAGHEIDLEGSPPSEHNSEEKSTLPSNSDILTSANPVSQASETPDHSIESNTGSTQSPTS). Polar residues-rich tracts occupy residues 41-60 (TLPS…QASE) and 67-78 (ESNTGSTQSPTS). Helical transmembrane passes span 85 to 105 (FSFC…CVLP), 112 to 132 (FLIA…SGSI), 162 to 182 (FLKT…LVLL), and 187 to 208 (WGWK…SFCL).

It belongs to the WTF family.

It localises to the spore membrane. In terms of biological role, may act in meiotic drive. This Schizosaccharomyces pombe (strain 972 / ATCC 24843) (Fission yeast) protein is Wtf element wtf15.